Here is a 520-residue protein sequence, read N- to C-terminus: MDNGLSRRHEISELLQLVDSTTTRAFHTSNGSPKSDCRNDSKPLKRYEELFGSFPAEGLGTSGFKDAIDLISRNSVDNASPGFLGKLVSAPSAPGIASDLFLSILNNNGHVQRAGPALTAIEKHTSLELARLFDLQGPHAGGVTVPGGAAGNLMAMLVARNIVAPESKQRGLTPGEYAIFVSDAAHYSVSNSANVIGLGNDSIIRVPALDDGTMDADALQRAVDQAGKDGKKPLLIAATSGSTVNGAFDPLDKIGEIAHRVGAWFHVDACWGGGVVFSDKLKHLMKGSHLADSIAFNPHKLLGVPLVCAFLLVNDLRTLWLANKLNAGYLFHDDAPKKNGVSSEQSANTNGSEKESWRHSKLLDTAPDVMKINDLASLTIQCSRRHDATKMFLHWLYYGTAGIAREVEQAVDSAKHLACLVRDHPRFELIWDPEQVFAQVCFYWKSASTPEKSGETLAEINSRNTRALFQGIEEMGWKVDFAPGKAKGEFLRIACNRLTTRQTVEKIVSELVELGESLGL.

86–88 serves as a coordination point for substrate; sequence KLV. Lys300 is subject to N6-(pyridoxal phosphate)lysine. A disordered region spans residues 338–357; that stretch reads KNGVSSEQSANTNGSEKESW. The span at 340 to 351 shows a compositional bias: polar residues; it reads GVSSEQSANTNG. Residue Arg492 coordinates substrate.

This sequence belongs to the group II decarboxylase family. Requires pyridoxal 5'-phosphate as cofactor.

It functions in the pathway mycotoxin biosynthesis. Functionally, glutamate decarboxylase-like protein; part of the gene cluster that mediates the biosynthesis of butenolide, a mycotoxin that shows antibiotic activity but does not seem to play a major role in the spread of head blight in wheat. Butenolide is derived from glutamic acid via a 4-acetamido-2-butenoic acid intermediate. The predicted function of the NADH:flavin oxidoreductase FG08077, the cytochrome P450 monooxygenase FG08079, the decarboxylase FG08083, and the putative acetyltransferase FG08082 are consistent with this pathway, however, the respective activities of the butelonide biosynthesis cluster enzymes have still to be experimentally determined. The protein is Glutamate decarboxylase-like protein FG08083 of Gibberella zeae (strain ATCC MYA-4620 / CBS 123657 / FGSC 9075 / NRRL 31084 / PH-1) (Wheat head blight fungus).